Reading from the N-terminus, the 377-residue chain is MEVAMSKDLQQEANLAKKRYIDLCRQGRIFDARNRIIGGDTQAWDFQVRDQKIKEITDKARHEAFAAEMKHNDKVMCMAHDREQRHRKQLCRAINDFQQNFQKPETRREFDLSDPLALQKELPARISDNDMRNTISGMQKFMGEDLNFQERRRFQKEQSREWFLQQHGEREKARADHLLAEHLHTQTRLKFDETARELMKLEGSTRKEVCAAVKAFNKNQVVELTERKRQEKQQEQEDNMTEITNLLHGDLLSENPRPVASSFGSHRVVLDRWKGMNREQLEEIWFTQKRQIQEKLRLQEEERQHSMDWDLRRIRKAHASLLHERQQQRLLREQRRALDCSNLNLARQQYLQKKQMNTASSSQPTEDYFSQFNTRSR.

Residues 217-246 (NKNQVVELTERKRQEKQQEQEDNMTEITNL) adopt a coiled-coil conformation. The interval 354–377 (KQMNTASSSQPTEDYFSQFNTRSR) is disordered.

The protein belongs to the RIB43A family. Microtubule inner protein component of sperm flagellar doublet microtubules.

The protein resides in the cytoplasm. Its subcellular location is the cytoskeleton. It is found in the cilium axoneme. The protein localises to the flagellum axoneme. Functionally, microtubule inner protein (MIP) part of the dynein-decorated doublet microtubules (DMTs) in cilia axoneme, which is required for motile cilia beating. This is RIB43A-like with coiled-coils protein 2 from Mus musculus (Mouse).